A 283-amino-acid chain; its full sequence is Gap junction beta-1 protein (283 aa).

The Cytoplasmic portion of the chain corresponds to 1 to 22; sequence MNWTGLYTLLSGVNRHSTAIGR. A helical membrane pass occupies residues 23 to 45; the sequence is VWLSVIFIFRIMVLVVAAESVWG. The Extracellular portion of the chain corresponds to 46 to 75; sequence DEKSSFICNTLQPGCNSVCYDHFFPISHVR. A helical membrane pass occupies residues 76 to 95; that stretch reads LWSLQLILVSTPALLVAMHV. The Cytoplasmic portion of the chain corresponds to 96–130; that stretch reads AHQQHIEKKMLRLEGHGDPLHLEEVKRHKVHISGT. Residues 131-153 form a helical membrane-spanning segment; that stretch reads LWWTYVISVVFRLLFEAVFMYVF. Residues 154-191 are Extracellular-facing; it reads YLLYPGYAMVRLVKCEAFPCPNTVDCFVSRPTEKTVFT. Residues 192-214 form a helical membrane-spanning segment; the sequence is VFMLAASGICIILNVAEVVYLII. Residues 215–283 are Cytoplasmic-facing; that stretch reads RACARRAQRR…AEKSDRCSAC (69 aa). Ser-233, Ser-258, Ser-266, and Ser-277 each carry phosphoserine.

It belongs to the connexin family. Beta-type (group I) subfamily. As to quaternary structure, a connexon is composed of a hexamer of connexins. Interacts with CNST.

The protein resides in the cell membrane. Its subcellular location is the cell junction. The protein localises to the gap junction. In terms of biological role, one gap junction consists of a cluster of closely packed pairs of transmembrane channels, the connexons, through which materials of low MW diffuse from one cell to a neighboring cell. This is Gap junction beta-1 protein (Gjb1) from Mus musculus (Mouse).